Here is an 88-residue protein sequence, read N- to C-terminus: Putative septation protein SpoVG (88 aa).

It belongs to the SpoVG family.

Functionally, could be involved in septation. This is Putative septation protein SpoVG from Lachnospira eligens (strain ATCC 27750 / DSM 3376 / VPI C15-48 / C15-B4) (Eubacterium eligens).